We begin with the raw amino-acid sequence, 78 residues long: Large ribosomal subunit protein bL28 (78 aa).

The protein belongs to the bacterial ribosomal protein bL28 family.

The chain is Large ribosomal subunit protein bL28 from Methylococcus capsulatus (strain ATCC 33009 / NCIMB 11132 / Bath).